A 385-amino-acid polypeptide reads, in one-letter code: Tryptophan--tRNA ligase (385 aa).

Positions 82–90 (PSGPMHIGH) match the 'HIGH' region motif. Residues 253–257 (KMSAS) carry the 'KMSKS' region motif.

This sequence belongs to the class-I aminoacyl-tRNA synthetase family.

It localises to the cytoplasm. The catalysed reaction is tRNA(Trp) + L-tryptophan + ATP = L-tryptophyl-tRNA(Trp) + AMP + diphosphate + H(+). This Pyrococcus abyssi (strain GE5 / Orsay) protein is Tryptophan--tRNA ligase.